The sequence spans 355 residues: Peptide chain release factor 1 (355 aa).

Glutamine 233 is subject to N5-methylglutamine.

This sequence belongs to the prokaryotic/mitochondrial release factor family. Post-translationally, methylated by PrmC. Methylation increases the termination efficiency of RF1.

Its subcellular location is the cytoplasm. In terms of biological role, peptide chain release factor 1 directs the termination of translation in response to the peptide chain termination codons UAG and UAA. This Bacillus cytotoxicus (strain DSM 22905 / CIP 110041 / 391-98 / NVH 391-98) protein is Peptide chain release factor 1.